Here is a 236-residue protein sequence, read N- to C-terminus: MSLGLVGRKVGMTRIFTEEGDSQPVTVLDVSNNRVTQIKTPATDGYSAVQVTFGKRRAIRVNKPSAGHFAKAAVEAGEILREFRVAEEILGTLSPGTVIGLDIFQPGQRVDVTGTSIGKGYAGAIKRHGFASNRASHGNSRSHNVPGSIGMAQDPGRVFPGKRMTGHLGNVRRTIQNLEILRIDAERGLLIIKGAIPGSKGGDVTVSPSIRSARPTNNGNVNAAAKGGAKSGKKGG.

Disordered regions lie at residues 132–153 (SNRA…GMAQ) and 200–236 (KGGD…KKGG). A compositionally biased stretch (polar residues) spans 133–145 (NRASHGNSRSHNV). The residue at position 153 (Gln-153) is an N5-methylglutamine. Residues 206–216 (VSPSIRSARPT) are compositionally biased toward polar residues. Positions 217–228 (NNGNVNAAAKGG) are enriched in low complexity.

The protein belongs to the universal ribosomal protein uL3 family. Part of the 50S ribosomal subunit. Forms a cluster with proteins L14 and L19. In terms of processing, methylated by PrmB.

In terms of biological role, one of the primary rRNA binding proteins, it binds directly near the 3'-end of the 23S rRNA, where it nucleates assembly of the 50S subunit. The sequence is that of Large ribosomal subunit protein uL3 from Nitrosospira multiformis (strain ATCC 25196 / NCIMB 11849 / C 71).